Reading from the N-terminus, the 480-residue chain is UDP-N-acetylmuramate--L-alanine ligase (480 aa).

129–135 is an ATP binding site; that stretch reads GSHGKTT.

Belongs to the MurCDEF family.

It localises to the cytoplasm. It carries out the reaction UDP-N-acetyl-alpha-D-muramate + L-alanine + ATP = UDP-N-acetyl-alpha-D-muramoyl-L-alanine + ADP + phosphate + H(+). It participates in cell wall biogenesis; peptidoglycan biosynthesis. Cell wall formation. This Syntrophus aciditrophicus (strain SB) protein is UDP-N-acetylmuramate--L-alanine ligase.